Reading from the N-terminus, the 74-residue chain is Cytochrome c oxidase assembly factor 5 (74 aa).

Residues Gln-27 to Arg-65 enclose the CHCH domain. The short motif at Cys-30 to Cys-41 is the Cx10C motif element. 2 cysteine pairs are disulfide-bonded: Cys-30–Cys-57 and Cys-41–Cys-47. Residue Ser-37 is modified to Phosphoserine. Positions Cys-47 to Cys-57 match the Cx9C motif motif.

Belongs to the PET191 family.

Its function is as follows. Involved in an early step of the mitochondrial complex IV assembly process. This chain is Cytochrome c oxidase assembly factor 5 (COA5), found in Bos taurus (Bovine).